Consider the following 665-residue polypeptide: Mitochondrial Rho GTPase 1 (665 aa).

The Cytoplasmic segment spans residues 1 to 634; the sequence is MTNDVIRIVV…NQDPEEETNT (634 aa). A Miro 1 domain is found at 3 to 177; the sequence is NDVIRIVVCG…FYLCQKAVMH (175 aa). GTP contacts are provided by residues 12 to 19, 61 to 67, and 119 to 122; these read GDEGVGKS, DTQFSNS, and NVFD. EF-hand domains are found at residues 193–228 and 313–348; these read NAVAALQRVFFLSDRDQDGYLSDQEMLELQVKCFGR and EGYRFLVDLFLLFDKDNDGGLNDSELKTLFKPTPGI. Ca(2+) is bound by residues Asp-206, Asp-208, Asp-210, Tyr-212, Glu-217, Asp-326, Asp-328, Asp-330, and Glu-337. The 167-residue stretch at 452–618 folds into the Miro 2 domain; that stretch reads RSVFNCFVLG…FIQLAEAAQQ (167 aa). Residues 461–468, 498–502, and 567–570 contribute to the GTP site; these read GSHMSGKT, EMTGG, and LKAD. A helical; Anchor for type IV membrane protein membrane pass occupies residues 635–655; sequence IMPFALAGGATVLLAAAVAWI. Residues 656 to 665 are Mitochondrial intermembrane-facing; that stretch reads FKNVRVAGRE.

It belongs to the mitochondrial Rho GTPase family.

It is found in the mitochondrion outer membrane. Functionally, mitochondrial GTPase involved in mitochondrial trafficking. Probably involved in control of anterograde transport of mitochondria and their subcellular distribution. In Yarrowia lipolytica (strain CLIB 122 / E 150) (Yeast), this protein is Mitochondrial Rho GTPase 1 (GEM1).